A 24-amino-acid polypeptide reads, in one-letter code: Protein YsdE (24 aa).

The sequence is that of Protein YsdE from Escherichia coli (strain K12).